A 627-amino-acid chain; its full sequence is Protein CER1-like 1 (627 aa).

The next 5 helical transmembrane spans lie at 19 to 39, 48 to 68, 126 to 146, 186 to 206, and 328 to 348; these read FKYL…VTAV, LMIV…ISVS, GAIL…YWFH, LLFA…IVSI, and YLTC…TSAI. The 135-residue stretch at 138–272 folds into the Fatty acid hydroxylase domain; that stretch reads VEFLYYWFHR…MPIYDFIYGT (135 aa).

This sequence belongs to the sterol desaturase family. As to expression, expressed in flowers and siliques. Not detected in pollen, pedicels and seeds.

Its subcellular location is the membrane. This chain is Protein CER1-like 1, found in Arabidopsis thaliana (Mouse-ear cress).